The sequence spans 183 residues: MVPSREFFEEEMDRVLENEAQKLSLTNLLKNVFAQTLDMKPEGVLTTEEALLAWLVDECKKEYLHQLIELVMQVPVSVEAPTTSAINNSLGIIRQTHGQGEDNFGRLLCSLSFASCFLELVLQSDERCLSVFASELAKFYVESQNLWLAYSGGLSAGLRERFPRSWLYFALKQKWLRFIYFFK.

The protein belongs to the Bcl-2 family.

This is an uncharacterized protein from Equine herpesvirus 2 (strain 86/87) (EHV-2).